The sequence spans 335 residues: Avermitilol synthase (335 aa).

Residues Asp80, Asp84, Asn219, Ser223, and Glu227 each coordinate Mg(2+). Residues 80 to 84 (DDQFD) carry the DDXXD motif motif.

It belongs to the terpene synthase family. The cofactor is Mg(2+).

It carries out the reaction (2E,6E)-farnesyl diphosphate + H2O = avermitilol + diphosphate. Its function is as follows. Catalyzes the cyclization of farnesyl diphosphate to avermitilol. This Streptomyces avermitilis (strain ATCC 31267 / DSM 46492 / JCM 5070 / NBRC 14893 / NCIMB 12804 / NRRL 8165 / MA-4680) protein is Avermitilol synthase (tpc1).